The following is an 86-amino-acid chain: YcgL domain-containing protein Smlt4554 (86 aa).

Positions 1–85 (MHAYVYKSQL…SVASLMPRHY (85 aa)) constitute a YcgL domain.

The protein is YcgL domain-containing protein Smlt4554 of Stenotrophomonas maltophilia (strain K279a).